Here is a 478-residue protein sequence, read N- to C-terminus: tRNA modification GTPase MnmE (478 aa).

3 residues coordinate (6S)-5-formyl-5,6,7,8-tetrahydrofolate: arginine 25, glutamate 82, and lysine 135. The TrmE-type G domain maps to 231 to 400 (GIKVVIAGQP…LRQRLLQVVG (170 aa)). Residue asparagine 241 participates in K(+) binding. GTP is bound by residues 241-246 (NAGKSS), 260-266 (TPIAGTT), and 285-288 (DTAG). Serine 245 provides a ligand contact to Mg(2+). Threonine 260, isoleucine 262, and threonine 265 together coordinate K(+). Threonine 266 provides a ligand contact to Mg(2+). Lysine 478 lines the (6S)-5-formyl-5,6,7,8-tetrahydrofolate pocket.

The protein belongs to the TRAFAC class TrmE-Era-EngA-EngB-Septin-like GTPase superfamily. TrmE GTPase family. In terms of assembly, homodimer. Heterotetramer of two MnmE and two MnmG subunits. The cofactor is K(+).

The protein resides in the cytoplasm. In terms of biological role, exhibits a very high intrinsic GTPase hydrolysis rate. Involved in the addition of a carboxymethylaminomethyl (cmnm) group at the wobble position (U34) of certain tRNAs, forming tRNA-cmnm(5)s(2)U34. The sequence is that of tRNA modification GTPase MnmE from Polaromonas sp. (strain JS666 / ATCC BAA-500).